A 198-amino-acid polypeptide reads, in one-letter code: Glycerol-3-phosphate acyltransferase (198 aa).

The next 3 helical transmembrane spans lie at A5–I25, V114–L134, and A154–V176.

It belongs to the PlsY family. In terms of assembly, probably interacts with PlsX.

It is found in the cell membrane. It carries out the reaction an acyl phosphate + sn-glycerol 3-phosphate = a 1-acyl-sn-glycero-3-phosphate + phosphate. The protein operates within lipid metabolism; phospholipid metabolism. Its function is as follows. Catalyzes the transfer of an acyl group from acyl-phosphate (acyl-PO(4)) to glycerol-3-phosphate (G3P) to form lysophosphatidic acid (LPA). This enzyme utilizes acyl-phosphate as fatty acyl donor, but not acyl-CoA or acyl-ACP. This Desulforudis audaxviator (strain MP104C) protein is Glycerol-3-phosphate acyltransferase.